A 325-amino-acid polypeptide reads, in one-letter code: VSG expression site-associated protein 117A (325 aa).

The N-terminal stretch at methionine 1–glutamate 23 is a signal peptide. Asparagine 72, asparagine 290, and asparagine 313 each carry an N-linked (GlcNAc...) asparagine glycan.

Its function is as follows. Not known but may be related to activation of the variant surface glycoprotein genes. In Trypanosoma brucei brucei, this protein is VSG expression site-associated protein 117A.